We begin with the raw amino-acid sequence, 430 residues long: Delta(14)-sterol reductase (430 aa).

6 helical membrane passes run 12-32 (IGTGVLMLILPPISHYLHFLI), 67-87 (LAVAAYYLLLVALMYVLPAEI), 109-129 (FLVFFTFLGTMTVLEGPTWWF), 230-250 (FVSDSIVLVNLFETWYVVDAL), 267-287 (LGVMLLFGNAVWVPFMYCLQA), and 290-310 (LASFPVHLGLLGIAGVLAVQF). Residues lysine 323, arginine 327, leucine 350, tryptophan 355, and 362 to 363 (NY) each bind NADP(+). A run of 2 helical transmembrane segments spans residues 349–369 (LLISGWWGVARHVNYFGDWIM) and 376–396 (TTGFNTPLTYFYVIYFGILLL). NADP(+)-binding positions include aspartate 402, 406–410 (CREKY), and tyrosine 417.

This sequence belongs to the ERG4/ERG24 family.

The protein resides in the membrane. The enzyme catalyses 4,4-dimethyl-5alpha-cholesta-8,24-dien-3beta-ol + NADP(+) = 4,4-dimethyl-5alpha-cholesta-8,14,24-trien-3beta-ol + NADPH + H(+). Its pathway is steroid biosynthesis; zymosterol biosynthesis; zymosterol from lanosterol: step 2/6. Its function is as follows. Reduces the C14=C15 double bond of 4,4-dimethyl-cholesta-8,14,24-trienol to produce 4,4-dimethyl-cholesta-8,24-dienol. The polypeptide is Delta(14)-sterol reductase (ERG3) (Ascobolus immersus).